The sequence spans 514 residues: Flagellin B (514 aa).

This sequence belongs to the bacterial flagellin family. Heteromer of FlaA and FlaB. FlaB is located proximal to the hook while the remainder of the filament is composed of the predominant FlaA.

It localises to the secreted. The protein localises to the bacterial flagellum. Flagellin is the subunit protein which polymerizes to form the filaments of bacterial flagella. Important for motility and virulence. The sequence is that of Flagellin B (flaB) from Helicobacter pylori (strain J99 / ATCC 700824) (Campylobacter pylori J99).